We begin with the raw amino-acid sequence, 211 residues long: Bcl-2-related ovarian killer protein homolog B (211 aa).

The BH4 signature appears at lysine 32 to threonine 44. Residues valine 67–proline 83 carry the BH3 motif. The BH1 signature appears at glutamate 113–alanine 132. Positions tryptophan 165–valine 179 match the BH2 motif. Residues tryptophan 190–threonine 210 form a helical membrane-spanning segment.

This sequence belongs to the Bcl-2 family. In terms of tissue distribution, expressed strongly in ovary and more weakly in eye. Little expression in other tissues examined.

The protein resides in the membrane. Its function is as follows. May play a role in apoptosis. Does not appear to show pro-apoptotic activity when expressed ectopically in early embryos. The chain is Bcl-2-related ovarian killer protein homolog B (bokb) from Danio rerio (Zebrafish).